The chain runs to 151 residues: Monooxygenase nsrQ (151 aa).

Belongs to the avfA family.

Its pathway is secondary metabolite biosynthesis. Monooxygenase; part of the gene cluster that mediates the biosynthesis of the tetrahydroxanthone dimer neosartorin, which exhibits antibacterial activity. The two different monomeric units appear to be synthesized by the same set of enzymes, among which the Baeyer-Villiger monooxygenase nsrF is the key enzyme for the divergence of the biosynthetic routes. The pathway begins with the synthesis of atrochrysone thioester by the polyketide synthase nsrB. The atrochrysone carboxyl ACP thioesterase nsrC then breaks the thioester bond and releases the atrochrysone carboxylic acid from AacuL. Atrochrysone carboxylic acid is decarboxylated by the decarboxylase nsrE, and oxidized by the anthrone oxygenase nsrD to yield emodin. Emodin is then reduced to emodin hydroquinone by the oxidoreductase nsrR. A-ring reduction by the short chain dehydrogenase nsrJ, dehydration by the scytalone dehydratase-like protein nsrI and probable spontaneous re-oxidation, results in overall deoxygenation to chrysophanol. The Baeyer-Villiger monooxygenase nsrF accepts chrysophanol as a substrate to insert one oxygen atom at two different positions to yield the precursors of both monomric units. NsrF is promiscuous/flexible in interacting with the 2 (non methylated and methylated) aromatic rings of chrysophanol, thus diverging the biosynthetic pathway at this point. After the hydrolysis of the lactones, methylesterification by the methyltransferase nsrG yields respectively moniliphenone and 2,2',6'-trihydroxy-4-methyl-6-methoxya-cyldiphenylmethanone. The next steps are the hydroxylation by the FAD-dependent monooxygenase nsrK, followed by isomerization by the monooxygenase nsrQ. The short chain dehydrogenase/reductase nsrO then catalyzes the C-5 ketoreduction to give the xanthone skeleton of blennolide C and 5-acetylblennolide A. The acetyltransferase nsrL has a strict substrate specificity and uses only blennolide A but not blennolide C to yield 5-acetylblennolide A as the single-acetylated product. In the final step of the biosynthesis, the heterodimerization of the 2 xanthones, blennolide C and 5-acetylblennolide A, is catalyzed by the cytochrome P450 monooxygenase nsrP. NsrP can utilize at least three different xanthones as its substrates to perform the dimerization reaction. The sequence is that of Monooxygenase nsrQ from Aspergillus novofumigatus (strain IBT 16806).